Consider the following 209-residue polypeptide: Ion-translocating oxidoreductase complex subunit G (209 aa).

Residues 9 to 29 (GITLALFAAGATGLTAVVNSL) form a helical membrane-spanning segment. T175 is modified (FMN phosphoryl threonine).

Belongs to the RnfG family. In terms of assembly, the complex is composed of six subunits: RnfA, RnfB, RnfC, RnfD, RnfE and RnfG. The cofactor is FMN.

The protein resides in the cell inner membrane. Functionally, part of a membrane-bound complex that couples electron transfer with translocation of ions across the membrane. The sequence is that of Ion-translocating oxidoreductase complex subunit G from Yersinia pestis.